A 441-amino-acid polypeptide reads, in one-letter code: Probable glycine dehydrogenase (decarboxylating) subunit 1 (441 aa).

Belongs to the GcvP family. N-terminal subunit subfamily. The glycine cleavage system is composed of four proteins: P, T, L and H. In this organism, the P 'protein' is a heterodimer of two subunits.

The catalysed reaction is N(6)-[(R)-lipoyl]-L-lysyl-[glycine-cleavage complex H protein] + glycine + H(+) = N(6)-[(R)-S(8)-aminomethyldihydrolipoyl]-L-lysyl-[glycine-cleavage complex H protein] + CO2. The glycine cleavage system catalyzes the degradation of glycine. The P protein binds the alpha-amino group of glycine through its pyridoxal phosphate cofactor; CO(2) is released and the remaining methylamine moiety is then transferred to the lipoamide cofactor of the H protein. The sequence is that of Probable glycine dehydrogenase (decarboxylating) subunit 1 from Halobacterium salinarum (strain ATCC 700922 / JCM 11081 / NRC-1) (Halobacterium halobium).